The following is a 118-amino-acid chain: NAD(P)H-quinone oxidoreductase subunit M (118 aa).

Belongs to the complex I NdhM subunit family. In terms of assembly, NDH-1 can be composed of about 15 different subunits; different subcomplexes with different compositions have been identified which probably have different functions.

It localises to the cellular thylakoid membrane. It carries out the reaction a plastoquinone + NADH + (n+1) H(+)(in) = a plastoquinol + NAD(+) + n H(+)(out). The catalysed reaction is a plastoquinone + NADPH + (n+1) H(+)(in) = a plastoquinol + NADP(+) + n H(+)(out). NDH-1 shuttles electrons from an unknown electron donor, via FMN and iron-sulfur (Fe-S) centers, to quinones in the respiratory and/or the photosynthetic chain. The immediate electron acceptor for the enzyme in this species is believed to be plastoquinone. Couples the redox reaction to proton translocation, and thus conserves the redox energy in a proton gradient. Cyanobacterial NDH-1 also plays a role in inorganic carbon-concentration. This Rippkaea orientalis (strain PCC 8801 / RF-1) (Cyanothece sp. (strain PCC 8801)) protein is NAD(P)H-quinone oxidoreductase subunit M.